We begin with the raw amino-acid sequence, 296 residues long: NADH-cytochrome b5 reductase 2 (296 aa).

A helical membrane pass occupies residues 2 to 24 (LVALAAIGVTVLLFLIKALGSGA). One can recognise an FAD-binding FR-type domain in the interval 35–147 (NAKYPLPLIE…RGPNGLLVYK (113 aa)). FAD is bound by residues 127 to 142 (DSLK…GPNG) and 166 to 201 (VAKH…KCYL).

This sequence belongs to the flavoprotein pyridine nucleotide cytochrome reductase family. It depends on FAD as a cofactor.

Its subcellular location is the membrane. It catalyses the reaction 2 Fe(III)-[cytochrome b5] + NADH = 2 Fe(II)-[cytochrome b5] + NAD(+) + H(+). Functionally, NADH-cytochrome b5 reductases are involved in desaturation and elongation of fatty acids, cholesterol biosynthesis and drug metabolism. This Xenopus laevis (African clawed frog) protein is NADH-cytochrome b5 reductase 2 (cyb5r2).